Reading from the N-terminus, the 483-residue chain is PAT complex subunit CCDC47 (483 aa).

The first 20 residues, 1-20, serve as a signal peptide directing secretion; that stretch reads MKAFHTFCVVLLVFGSVSEA. Residues 21 to 135 lie on the Cytoplasmic side of the membrane; that stretch reads KFDDFEDEED…PAHLQNSWES (115 aa). The segment at 46-118 is disordered; sequence MEDSVTESPQ…PDTSSSKNKD (73 aa). Over residues 60–104 the composition is skewed to acidic residues; it reads TEDDEDETTVELEGQDENQEGDFEDADTQEGDTESEPYDDEEFEG. Positions 105–118 are enriched in basic and acidic residues; the sequence is YEDKPDTSSSKNKD. A helical transmembrane segment spans residues 136–155; that stretch reads YYLEILMVTGLLAYIMNYII. The Lumenal segment spans residues 156–483; the sequence is GKNKNSRLAQ…KMKQIKVKAM (328 aa). Asn-178 is a glycosylation site (N-linked (GlcNAc...) asparagine). Positions 424 to 483 are disordered; that stretch reads QRQEAAQSRREEKKRAEKERIMNEEDPEKQRRLEEAALRRDQKKLEKKQMKMKQIKVKAM. Positions 430–472 are enriched in basic and acidic residues; that stretch reads QSRREEKKRAEKERIMNEEDPEKQRRLEEAALRRDQKKLEKKQ. A coiled-coil region spans residues 451-481; sequence EKQRRLEEAALRRDQKKLEKKQMKMKQIKVK. Over residues 473–483 the composition is skewed to basic residues; the sequence is MKMKQIKVKAM.

This sequence belongs to the CCDC47 family. Component of the PAT complex, composed of WDR83OS/Asterix and CCDC47. The PAT complex is part of the multi-pass translocon (MPT) complex, composed of three subcomplexes, the GEL complex (composed of RAB5IF/OPTI and TMCO1), the BOS complex (composed of NCLN/Nicalin, NOMO1 and TMEM147) and the PAT complex (composed of WDR83OS/Asterix and CCDC47). The MPT complex associates with the SEC61 complex. Interacts with VCP, HSPA5, DERL1, DERL2 and SELENOS.

It is found in the endoplasmic reticulum membrane. The protein localises to the rough endoplasmic reticulum membrane. Component of the multi-pass translocon (MPT) complex that mediates insertion of multi-pass membrane proteins into the lipid bilayer of membranes. The MPT complex takes over after the SEC61 complex: following membrane insertion of the first few transmembrane segments of proteins by the SEC61 complex, the MPT complex occludes the lateral gate of the SEC61 complex to promote insertion of subsequent transmembrane regions. Within the MPT complex, the PAT subcomplex sequesters any highly polar regions in the transmembrane domains away from the non-polar membrane environment until they can be buried in the interior of the fully assembled protein. Within the PAT subcomplex, CCDC47 occludes the lateral gate of the SEC61 complex. Involved in the regulation of calcium ion homeostasis in the ER. Required for proper protein degradation via the ERAD (ER-associated degradation) pathway. Has an essential role in the maintenance of ER organization during embryogenesis. The sequence is that of PAT complex subunit CCDC47 (CCDC47) from Pongo abelii (Sumatran orangutan).